The primary structure comprises 362 residues: MKVVLVLYDAGKHAQDEERLYGCTENALGIRDWLEKQGHDVVVTSDKEGQNSVLEKNISDADVIISTPFHPAYITKERIDKAKKLKLLVVAGVGSDHIDLDYINQSGRDISVLEVTGSNVVSVAEHVVMTMLVLVRNFVPAHEQIISGGWNVAEIAKDSFDIEGKVIATIGAGRIGYRVLERLVAFNPKELLYYDYQSLSKEAEEKVGARRVHDIKELVAQADIVTINCPLHAGSKGLVNAELLKHFKKGAWLVNTARGAICVAEDVAAAVKSGQLRGYGGDVWFPQPAPKDHPWRSMANKYGAGNAMTPHYSGSVIDAQVRYAQGTKNILESFFTQKFDYRPQDIILLNGKYKTKSYGADK.

Substrate-binding residues include Val-93 and Asn-119. NAD(+) is bound by residues Arg-174–Ile-175, Asp-195, Pro-230–Gly-234, Thr-256, Asp-282, His-311–Gly-314, and Ser-357.

This sequence belongs to the D-isomer specific 2-hydroxyacid dehydrogenase family. FDH subfamily. Homodimer.

The protein localises to the cytoplasm. It catalyses the reaction formate + NAD(+) = CO2 + NADH. Functionally, catalyzes the NAD(+)-dependent oxidation of formate to carbon dioxide. Formate oxidation is the final step in the methanol oxidation pathway in methylotrophic microorganisms. Has a role in the detoxification of exogenous formate in non-methylotrophic organisms. This Pichia angusta (Yeast) protein is Formate dehydrogenase.